A 414-amino-acid chain; its full sequence is 5-aminolevulinate synthase (414 aa).

Residues arginine 22, serine 133, and lysine 152 each contribute to the substrate site. Pyridoxal 5'-phosphate is bound by residues serine 185, histidine 213, and threonine 241. Lysine 244 is a catalytic residue. Lysine 244 bears the N6-(pyridoxal phosphate)lysine mark. Residues threonine 273 and threonine 274 each coordinate pyridoxal 5'-phosphate. Position 359 (threonine 359) interacts with substrate.

The protein belongs to the class-II pyridoxal-phosphate-dependent aminotransferase family. In terms of assembly, homodimer. It depends on pyridoxal 5'-phosphate as a cofactor.

The catalysed reaction is succinyl-CoA + glycine + H(+) = 5-aminolevulinate + CO2 + CoA. It participates in porphyrin-containing compound metabolism; protoporphyrin-IX biosynthesis; 5-aminolevulinate from glycine: step 1/1. This chain is 5-aminolevulinate synthase (hemA), found in Rickettsia typhi (strain ATCC VR-144 / Wilmington).